A 679-amino-acid chain; its full sequence is Methionine--tRNA ligase (679 aa).

Positions 15–25 (PYANGPIHLGH) match the 'HIGH' region motif. Zn(2+) contacts are provided by C146, C149, C159, and C162. Residues 332-336 (KMSKS) carry the 'KMSKS' region motif. K335 provides a ligand contact to ATP. The region spanning 578-679 (DFAKIDLRIA…EGAQPGMKVK (102 aa)) is the tRNA-binding domain.

It belongs to the class-I aminoacyl-tRNA synthetase family. MetG type 1 subfamily. In terms of assembly, homodimer. Zn(2+) serves as cofactor.

The protein localises to the cytoplasm. The catalysed reaction is tRNA(Met) + L-methionine + ATP = L-methionyl-tRNA(Met) + AMP + diphosphate. Functionally, is required not only for elongation of protein synthesis but also for the initiation of all mRNA translation through initiator tRNA(fMet) aminoacylation. This is Methionine--tRNA ligase from Shewanella halifaxensis (strain HAW-EB4).